The following is a 445-amino-acid chain: Phosphoglucosamine mutase (445 aa).

S101 functions as the Phosphoserine intermediate in the catalytic mechanism. Residues S101, D240, D242, and D244 each coordinate Mg(2+). The residue at position 101 (S101) is a Phosphoserine.

The protein belongs to the phosphohexose mutase family. It depends on Mg(2+) as a cofactor. Post-translationally, activated by phosphorylation.

It carries out the reaction alpha-D-glucosamine 1-phosphate = D-glucosamine 6-phosphate. Functionally, catalyzes the conversion of glucosamine-6-phosphate to glucosamine-1-phosphate. The sequence is that of Phosphoglucosamine mutase from Pseudomonas paraeruginosa (strain DSM 24068 / PA7) (Pseudomonas aeruginosa (strain PA7)).